A 137-amino-acid chain; its full sequence is Nucleoside diphosphate kinase (137 aa).

The ATP site is built by lysine 9, phenylalanine 57, arginine 85, threonine 91, arginine 102, and asparagine 112. The Pros-phosphohistidine intermediate role is filled by histidine 115.

Belongs to the NDK family. Homotetramer. Mg(2+) serves as cofactor.

The protein localises to the cytoplasm. The catalysed reaction is a 2'-deoxyribonucleoside 5'-diphosphate + ATP = a 2'-deoxyribonucleoside 5'-triphosphate + ADP. The enzyme catalyses a ribonucleoside 5'-diphosphate + ATP = a ribonucleoside 5'-triphosphate + ADP. Major role in the synthesis of nucleoside triphosphates other than ATP. The ATP gamma phosphate is transferred to the NDP beta phosphate via a ping-pong mechanism, using a phosphorylated active-site intermediate. This chain is Nucleoside diphosphate kinase, found in Campylobacter hominis (strain ATCC BAA-381 / DSM 21671 / CCUG 45161 / LMG 19568 / NCTC 13146 / CH001A).